The primary structure comprises 122 residues: Large ribosomal subunit protein uL14 (122 aa).

It belongs to the universal ribosomal protein uL14 family. Part of the 50S ribosomal subunit. Forms a cluster with proteins L3 and L19. In the 70S ribosome, L14 and L19 interact and together make contacts with the 16S rRNA in bridges B5 and B8.

Functionally, binds to 23S rRNA. Forms part of two intersubunit bridges in the 70S ribosome. This chain is Large ribosomal subunit protein uL14, found in Rhodopirellula baltica (strain DSM 10527 / NCIMB 13988 / SH1).